Reading from the N-terminus, the 500-residue chain is Protein adenylyltransferase Fic (500 aa).

A helical membrane pass occupies residues 39–59; sequence LSFLIFFVIGSLFSGLMFALL. 2 TPR repeats span residues 122 to 155 and 156 to 190; these read ALSS…SPRH and PEIL…NPSH. The short motif at 247–252 is the Inhibitory (S/T)XXXE(G/N) motif element; it reads SVGIEG. ATP contacts are provided by residues Glu-251 and 333–336; that span reads VGGH. Residues 302–437 form the Fido domain; the sequence is ITLKDLLEIH…IRPFVRFIAD (136 aa). His-380 is a catalytic residue. Residues 384 to 391, 416 to 417, and Asn-424 each bind ATP; these read DGNGRTSR and YY. The disordered stretch occupies residues 477–500; the sequence is GREGGSTVHEGSGTGDSIRIGTMW.

The protein belongs to the fic family. In terms of assembly, homodimer.

It localises to the membrane. The enzyme catalyses L-tyrosyl-[protein] + ATP = O-(5'-adenylyl)-L-tyrosyl-[protein] + diphosphate. It carries out the reaction L-threonyl-[protein] + ATP = 3-O-(5'-adenylyl)-L-threonyl-[protein] + diphosphate. It catalyses the reaction 3-O-(5'-adenylyl)-L-threonyl-[protein] + H2O = L-threonyl-[protein] + AMP + H(+). Its activity is regulated as follows. The side chain of Glu-251 determines which of the two opposing activities (AMPylase or de-AMPylase) will take place. In response to endoplasmic reticulum stress, mediates de-AMPylase activity. Adenylyltransferase activity is inhibited by the inhibitory helix present at the N-terminus: Glu-251 binds ATP and competes with ATP-binding at Arg-391, thereby preventing adenylyltransferase activity. In unstressed cells, disengagement of Glu-251 promotes adenylyltransferase activity. Activation dissociates ATP-binding from Glu-251, allowing ordered binding of the entire ATP moiety with the alpha-phosphate in an orientation that is productive for accepting an incoming target hydroxyl side chain. Functionally, protein that can both mediate the addition of adenosine 5'-monophosphate (AMP) to specific residues of target proteins (AMPylation), and the removal of the same modification from target proteins (de-AMPylation), depending on the context. The side chain of Glu-251 determines which of the two opposing activities (AMPylase or de-AMPylase) will take place. Acts as a key regulator of the unfolded protein response (UPR) by mediating AMPylation or de-AMPylation of Hsc70-3/BiP. In unstressed cells, acts as an adenylyltransferase by mediating AMPylation of Hsc70-3/BiP at 'Thr-518', thereby inactivating it. In response to endoplasmic reticulum stress, acts as a phosphodiesterase by mediating removal of ATP (de-AMPylation) from Hsc70-3/BiP at 'Thr-518', leading to restore HSPA5/BiP activity. The sequence is that of Protein adenylyltransferase Fic from Culex quinquefasciatus (Southern house mosquito).